We begin with the raw amino-acid sequence, 804 residues long: Leucine--tRNA ligase (804 aa).

Positions 40-51 match the 'HIGH' region motif; the sequence is PYPSGAGLHVGH. A 'KMSKS' region motif is present at residues 576-580; sequence KMSKS. Residue K579 participates in ATP binding.

It belongs to the class-I aminoacyl-tRNA synthetase family.

It is found in the cytoplasm. It catalyses the reaction tRNA(Leu) + L-leucine + ATP = L-leucyl-tRNA(Leu) + AMP + diphosphate. In Staphylococcus aureus (strain bovine RF122 / ET3-1), this protein is Leucine--tRNA ligase.